The following is a 505-amino-acid chain: Maturase K (505 aa).

The protein belongs to the intron maturase 2 family. MatK subfamily.

Its subcellular location is the plastid. It is found in the chloroplast. Usually encoded in the trnK tRNA gene intron. Probably assists in splicing its own and other chloroplast group II introns. The sequence is that of Maturase K from Rhizophora stylosa (Bakau).